A 265-amino-acid chain; its full sequence is MLDKMILGRFVPLQSFVHRLDPRMKMVFVFIMMILIFLMNNWQTYAVGIILIFIILKASNLSFMFLFNGLKPILFLLIFTLLMHIFLTKGGATLVDYGIINIQSQGVIMGIMISLRFILIIFLTTIMTLTTNPIELTDAIESLLKPFKKLKLPVHELALMMSIALRFIPTLMDETQKVMKAQMSRGSDMTAGTLKERIKAVIPLLVPLFVSAFKRAEDLAIAMEVRGYKGDAGRTKYRKLDWHTYDTLSLLTLIPITLLILYLKN.

6 consecutive transmembrane segments (helical) span residues 26–46 (MVFVFIMMILIFLMNNWQTYA), 47–67 (VGIILIFIILKASNLSFMFLF), 72–92 (PILFLLIFTLLMHIFLTKGGA), 107–127 (VIMGIMISLRFILIIFLTTIM), 152–172 (LPVHELALMMSIALRFIPTLM), and 243–263 (HTYDTLSLLTLIPITLLILYL).

This sequence belongs to the energy-coupling factor EcfT family. Forms a stable energy-coupling factor (ECF) transporter complex composed of 2 membrane-embedded substrate-binding proteins (S component), 2 ATP-binding proteins (A component) and 2 transmembrane proteins (T component). May be able to interact with more than 1 S component at a time.

Its subcellular location is the cell membrane. Functionally, transmembrane (T) component of an energy-coupling factor (ECF) ABC-transporter complex. Unlike classic ABC transporters this ECF transporter provides the energy necessary to transport a number of different substrates. The protein is Energy-coupling factor transporter transmembrane protein EcfT of Macrococcus caseolyticus (strain JCSC5402) (Macrococcoides caseolyticum).